Reading from the N-terminus, the 1076-residue chain is Cytadherence high molecular weight protein 3 (1076 aa).

Positions 264 to 284 (QGYDQGYDQQYDQQGYDQQGY) are fibronectin-binding. The span at 326 to 335 (QQPVEVAKPA) shows a compositional bias: low complexity. The segment at 326–351 (QQPVEVAKPAPTKPVGPKPQPGKKAT) is disordered. Pro residues predominate over residues 336 to 345 (PTKPVGPKPQ). Positions 562 to 616 (EITKLEELVEIKTDNTESLNKLETLIDENKKIIDQFKQLKEEAKKSNSNINLEKV) form a coiled coil. Disordered stretches follow at residues 789 to 808 (SREH…TTRI) and 850 to 873 (RINP…EQQP). A compositionally biased stretch (polar residues) spans 797-806 (PKAQHQQPTT). Residues 862-873 (YEQPDPYQEQQP) are compositionally biased toward low complexity.

The protein localises to the cell projection. It localises to the attachment organelle membrane. Binds immobilized fibronectin. Its function is as follows. Component of the cytoskeleton-like structure which stabilizes the shape of the wall-less mycoplasma. This cytoskeleton-like network of accessory proteins containing HMW proteins 1 to 5 allows the proper anchoring of cytadhesin proteins in the mycoplasmal membrane at the attachment organelle. Essential for successful surface parasitism. The sequence is that of Cytadherence high molecular weight protein 3 (hlp3) from Mycoplasmoides gallisepticum (strain R(low / passage 15 / clone 2)) (Mycoplasma gallisepticum).